We begin with the raw amino-acid sequence, 151 residues long: Deoxyuridine 5'-triphosphate nucleotidohydrolase (151 aa).

Residues 70-72, N83, 87-89, and M97 each bind substrate; these read RSG and LID.

This sequence belongs to the dUTPase family. In terms of assembly, homotrimer. Requires Mg(2+) as cofactor.

It carries out the reaction dUTP + H2O = dUMP + diphosphate + H(+). It functions in the pathway pyrimidine metabolism; dUMP biosynthesis; dUMP from dCTP (dUTP route): step 2/2. Functionally, this enzyme is involved in nucleotide metabolism: it produces dUMP, the immediate precursor of thymidine nucleotides and it decreases the intracellular concentration of dUTP so that uracil cannot be incorporated into DNA. The protein is Deoxyuridine 5'-triphosphate nucleotidohydrolase of Escherichia coli (strain K12 / MC4100 / BW2952).